Reading from the N-terminus, the 312-residue chain is Pantothenate kinase (312 aa).

An ATP-binding site is contributed by 97-104 (GSVAVGKS).

Belongs to the prokaryotic pantothenate kinase family.

It localises to the cytoplasm. The enzyme catalyses (R)-pantothenate + ATP = (R)-4'-phosphopantothenate + ADP + H(+). Its pathway is cofactor biosynthesis; coenzyme A biosynthesis; CoA from (R)-pantothenate: step 1/5. The chain is Pantothenate kinase from Mycobacterium bovis (strain BCG / Pasteur 1173P2).